Reading from the N-terminus, the 345-residue chain is Heat-inducible transcription repressor HrcA (345 aa).

It belongs to the HrcA family.

Its function is as follows. Negative regulator of class I heat shock genes (grpE-dnaK-dnaJ and groELS operons). Prevents heat-shock induction of these operons. The chain is Heat-inducible transcription repressor HrcA from Listeria welshimeri serovar 6b (strain ATCC 35897 / DSM 20650 / CCUG 15529 / CIP 8149 / NCTC 11857 / SLCC 5334 / V8).